The primary structure comprises 144 residues: Large ribosomal subunit protein uL16 (144 aa).

This sequence belongs to the universal ribosomal protein uL16 family. In terms of assembly, part of the 50S ribosomal subunit.

Binds 23S rRNA and is also seen to make contacts with the A and possibly P site tRNAs. This Porphyromonas gingivalis (strain ATCC 33277 / DSM 20709 / CIP 103683 / JCM 12257 / NCTC 11834 / 2561) protein is Large ribosomal subunit protein uL16.